Consider the following 427-residue polypeptide: Glutamyl-tRNA reductase (427 aa).

Substrate contacts are provided by residues 49–52, Ser105, 110–112, and Gln116; these read TCNR and EPQ. Cys50 (nucleophile) is an active-site residue. Position 185-190 (185-190) interacts with NADP(+); that stretch reads AAGEMN.

Belongs to the glutamyl-tRNA reductase family. Homodimer.

It carries out the reaction (S)-4-amino-5-oxopentanoate + tRNA(Glu) + NADP(+) = L-glutamyl-tRNA(Glu) + NADPH + H(+). It functions in the pathway porphyrin-containing compound metabolism; protoporphyrin-IX biosynthesis; 5-aminolevulinate from L-glutamyl-tRNA(Glu): step 1/2. Catalyzes the NADPH-dependent reduction of glutamyl-tRNA(Glu) to glutamate 1-semialdehyde (GSA). This chain is Glutamyl-tRNA reductase, found in Acinetobacter baumannii (strain AB307-0294).